The chain runs to 130 residues: Glycine cleavage system H protein (130 aa).

The Lipoyl-binding domain occupies 24–106 (TFTVGITDHA…YGDGWLYRIT (83 aa)). Lysine 65 is modified (N6-lipoyllysine).

Belongs to the GcvH family. As to quaternary structure, the glycine cleavage system is composed of four proteins: P, T, L and H. The cofactor is (R)-lipoate.

The glycine cleavage system catalyzes the degradation of glycine. The H protein shuttles the methylamine group of glycine from the P protein to the T protein. This is Glycine cleavage system H protein from Coxiella burnetii (strain CbuK_Q154) (Coxiella burnetii (strain Q154)).